The primary structure comprises 567 residues: Dynein, 70 kDa intermediate chain, flagellar outer arm (567 aa).

4 WD repeats span residues 214–254 (VPTS…GPVE), 261–302 (SHRD…ECVE), 360–399 (GHHG…KTPI), and 404–444 (YHPT…NEPT).

It belongs to the dynein intermediate chain family. In terms of assembly, consists of at least 3 heavy chains (alpha, beta and gamma), 2 intermediate chains and 8 light chains.

Its subcellular location is the cytoplasm. It localises to the cytoskeleton. The protein resides in the flagellum axoneme. Functionally, may play a role in regulating dynein heavy chain (DHC) activity. May function in holding IC78 to the DHC, or in stabilizing the entire dynein complex. In Chlamydomonas reinhardtii (Chlamydomonas smithii), this protein is Dynein, 70 kDa intermediate chain, flagellar outer arm (ODA6).